The following is a 152-amino-acid chain: Nucleoside diphosphate kinase (152 aa).

Lys12, Phe60, Arg88, Thr94, Arg105, and Asn115 together coordinate ATP. Catalysis depends on His118, which acts as the Pros-phosphohistidine intermediate.

The protein belongs to the NDK family. In terms of assembly, homotrimer. Mg(2+) serves as cofactor.

It carries out the reaction a 2'-deoxyribonucleoside 5'-diphosphate + ATP = a 2'-deoxyribonucleoside 5'-triphosphate + ADP. The enzyme catalyses a ribonucleoside 5'-diphosphate + ATP = a ribonucleoside 5'-triphosphate + ADP. Its function is as follows. Major role in the synthesis of nucleoside triphosphates other than ATP. The ATP gamma phosphate is transferred to the NDP beta phosphate via a ping-pong mechanism, using a phosphorylated active-site intermediate. The polypeptide is Nucleoside diphosphate kinase (ndk-1) (Neurospora crassa (strain ATCC 24698 / 74-OR23-1A / CBS 708.71 / DSM 1257 / FGSC 987)).